We begin with the raw amino-acid sequence, 212 residues long: Uridine kinase (212 aa).

Residue 13-20 coordinates ATP; it reads GGSGSGKT.

It belongs to the uridine kinase family.

It localises to the cytoplasm. The catalysed reaction is uridine + ATP = UMP + ADP + H(+). The enzyme catalyses cytidine + ATP = CMP + ADP + H(+). The protein operates within pyrimidine metabolism; CTP biosynthesis via salvage pathway; CTP from cytidine: step 1/3. It functions in the pathway pyrimidine metabolism; UMP biosynthesis via salvage pathway; UMP from uridine: step 1/1. This is Uridine kinase from Bacillus cereus (strain B4264).